Consider the following 227-residue polypeptide: Lipoprotein-releasing system ATP-binding protein LolD (227 aa).

Positions 5-227 (LICQNITKHY…QDGILRESNS (223 aa)) constitute an ABC transporter domain. An ATP-binding site is contributed by 41 to 48 (GSSGSGKS).

It belongs to the ABC transporter superfamily. Lipoprotein translocase (TC 3.A.1.125) family. As to quaternary structure, the complex is composed of two ATP-binding proteins (LolD) and two transmembrane proteins (LolC and LolE).

It localises to the cell inner membrane. Its function is as follows. Part of the ABC transporter complex LolCDE involved in the translocation of mature outer membrane-directed lipoproteins, from the inner membrane to the periplasmic chaperone, LolA. Responsible for the formation of the LolA-lipoprotein complex in an ATP-dependent manner. The polypeptide is Lipoprotein-releasing system ATP-binding protein LolD (Histophilus somni (strain 129Pt) (Haemophilus somnus)).